Here is a 511-residue protein sequence, read N- to C-terminus: 2,3-bisphosphoglycerate-independent phosphoglycerate mutase (511 aa).

Residues aspartate 14 and serine 64 each coordinate Mn(2+). The active-site Phosphoserine intermediate is the serine 64. Substrate is bound by residues histidine 125, arginine 155 to aspartate 156, arginine 187, arginine 193, arginine 259 to arginine 262, and lysine 333. Mn(2+) is bound by residues aspartate 400, histidine 404, aspartate 441, histidine 442, and histidine 460.

It belongs to the BPG-independent phosphoglycerate mutase family. In terms of assembly, monomer. Mn(2+) is required as a cofactor.

The enzyme catalyses (2R)-2-phosphoglycerate = (2R)-3-phosphoglycerate. It functions in the pathway carbohydrate degradation; glycolysis; pyruvate from D-glyceraldehyde 3-phosphate: step 3/5. Functionally, catalyzes the interconversion of 2-phosphoglycerate and 3-phosphoglycerate. This is 2,3-bisphosphoglycerate-independent phosphoglycerate mutase from Pseudomonas putida (strain GB-1).